The sequence spans 141 residues: Large ribosomal subunit protein uL11 (141 aa).

It belongs to the universal ribosomal protein uL11 family. As to quaternary structure, part of the ribosomal stalk of the 50S ribosomal subunit. Interacts with L10 and the large rRNA to form the base of the stalk. L10 forms an elongated spine to which L12 dimers bind in a sequential fashion forming a multimeric L10(L12)X complex. Post-translationally, one or more lysine residues are methylated.

Its function is as follows. Forms part of the ribosomal stalk which helps the ribosome interact with GTP-bound translation factors. The sequence is that of Large ribosomal subunit protein uL11 from Prosthecochloris aestuarii (strain DSM 271 / SK 413).